The primary structure comprises 23 residues: Paralytic peptide 1 (23 aa).

The cysteines at positions 7 and 19 are disulfide-linked.

This sequence belongs to the GBP/PSP1/paralytic peptide family. Hemolymph.

Causes rapid, rigid paralysis when injected into Lepidopteran larvae. The physiological role may be to reduce hemolymph loss following injury and promote wound healing. The chain is Paralytic peptide 1 from Manduca sexta (Tobacco hawkmoth).